A 617-amino-acid chain; its full sequence is BPI fold-containing family B member 4 (617 aa).

An N-terminal signal peptide occupies residues methionine 1–glycine 17. Positions arginine 124–leucine 149 are disordered. An N-linked (GlcNAc...) asparagine glycan is attached at asparagine 275. An intrachain disulfide couples cysteine 297 to cysteine 334.

It belongs to the BPI/LBP/Plunc superfamily. BPI/LBP family. In terms of tissue distribution, highly expressed in olfactory mucosa but undetectable in thymus, kidney, lung, brain, spleen and liver.

Its subcellular location is the secreted. The protein localises to the cytoplasm. Functionally, may have the capacity to recognize and bind specific classes of odorants. May act as a carrier molecule, transporting odorants across the mucus layer to access receptor sites. May serve as a primary defense mechanism by recognizing and removing potentially harmful odorants or pathogenic microorganisms from the mucosa or clearing excess odorant from mucus to enable new odorant stimuli to be received. This is BPI fold-containing family B member 4 (Bpifb4) from Rattus norvegicus (Rat).